The primary structure comprises 355 residues: MSFDVLTINPGSTSTKLAVYQGDKVLFEETVRHTMQEFADFNNVQEQFDFRWQVLRRVIDAFGYDVNNLDAVVGRGGLLRPVAGGTYMVTEKMLADLKTNKYGEHASNLGAMLAKKLADTLDIPSFIVDPVVVDEMLPIARFSGNELIARKSIFHALNHKAAGRKIAKKLGSDYEKLNFVIAHLGGGISVAAHRQGKAVDVNNALDGDGPFSPERSGSLPMNDFLEACFSGKWNKRELHDLIIGRGGMISYLGTNSMLEVEAKVKAGDEKAIQAFDAMAYQVSKEIGACSTVLHGKIDAIILTGGLARSDLFTSKIIEQTNWIASVIIEPGEDELEALNSGVQRVLAGLEKEKLY.

Belongs to the acetokinase family.

Its subcellular location is the cytoplasm. The enzyme catalyses butanoate + ATP = butanoyl phosphate + ADP. In Listeria welshimeri serovar 6b (strain ATCC 35897 / DSM 20650 / CCUG 15529 / CIP 8149 / NCTC 11857 / SLCC 5334 / V8), this protein is Probable butyrate kinase.